Consider the following 333-residue polypeptide: Methionine import ATP-binding protein MetN 1 (333 aa).

Residues Ile-2–Val-241 form the ABC transporter domain. An ATP-binding site is contributed by Gly-38 to Ser-45.

Belongs to the ABC transporter superfamily. Methionine importer (TC 3.A.1.24) family. In terms of assembly, the complex is composed of two ATP-binding proteins (MetN), two transmembrane proteins (MetI) and a solute-binding protein (MetQ).

The protein localises to the cell membrane. It catalyses the reaction L-methionine(out) + ATP + H2O = L-methionine(in) + ADP + phosphate + H(+). The catalysed reaction is D-methionine(out) + ATP + H2O = D-methionine(in) + ADP + phosphate + H(+). Part of the ABC transporter complex MetNIQ involved in methionine import. Responsible for energy coupling to the transport system. The polypeptide is Methionine import ATP-binding protein MetN 1 (Bacillus licheniformis (strain ATCC 14580 / DSM 13 / JCM 2505 / CCUG 7422 / NBRC 12200 / NCIMB 9375 / NCTC 10341 / NRRL NRS-1264 / Gibson 46)).